Reading from the N-terminus, the 266-residue chain is MDNILRVIILGFVQGISEFLPISSSGHLLLLKKFMNIDLPIVFDIYLHFATVLVVIIYYRRRILELVMVFIKFILRKSKMTELDSSNLNLILLILIITFFTALIGIFIEKFKVLFTFKLVLFNFIVTSILLFLIEFRIKIFNFKKNIFFSGLLIGIMQGIGAMPGISRSGITIFASILLGFSRTKSLEISFLSLIPIVFGSLFLKYNDLFKSDIIFNIFEINLGAIFAFIFGLFSISLFVKMLKNSKLYYFSIYLVSVVSLVYFLV.

8 helical membrane passes run 4–24, 39–59, 88–108, 114–134, 147–167, 186–206, 214–234, and 246–266; these read ILRV…PISS, LPIV…IIYY, LNLI…GIFI, LFTF…LFLI, IFFS…PGIS, SLEI…FLKY, IIFN…FGLF, and SKLY…YFLV.

Belongs to the UppP family.

Its subcellular location is the cell inner membrane. The catalysed reaction is di-trans,octa-cis-undecaprenyl diphosphate + H2O = di-trans,octa-cis-undecaprenyl phosphate + phosphate + H(+). In terms of biological role, catalyzes the dephosphorylation of undecaprenyl diphosphate (UPP). Confers resistance to bacitracin. The protein is Undecaprenyl-diphosphatase of Borrelia recurrentis (strain A1).